Consider the following 136-residue polypeptide: Peptide methionine sulfoxide reductase MsrB (136 aa).

Residues 6–128 (EVSLYKELTD…NSAALSFTDE (123 aa)) form the MsrB domain. Residues C45, C48, C94, and C97 each coordinate Zn(2+). C117 (nucleophile) is an active-site residue.

It belongs to the MsrB Met sulfoxide reductase family. Zn(2+) is required as a cofactor.

It catalyses the reaction L-methionyl-[protein] + [thioredoxin]-disulfide + H2O = L-methionyl-(R)-S-oxide-[protein] + [thioredoxin]-dithiol. The chain is Peptide methionine sulfoxide reductase MsrB from Photorhabdus laumondii subsp. laumondii (strain DSM 15139 / CIP 105565 / TT01) (Photorhabdus luminescens subsp. laumondii).